Reading from the N-terminus, the 281-residue chain is DegV domain-containing protein CPE2509 (281 aa).

The region spanning 4–279 is the DegV domain; it reads IAIITDSSCD…PGMVGVSIQK (276 aa). Hexadecanoate contacts are provided by threonine 60 and serine 93.

May bind long-chain fatty acids, such as palmitate, and may play a role in lipid transport or fatty acid metabolism. The chain is DegV domain-containing protein CPE2509 from Clostridium perfringens (strain 13 / Type A).